We begin with the raw amino-acid sequence, 730 residues long: Elongation factor 2 (730 aa).

The tr-type G domain maps to 19-260 (DRIRNIGIVA…MVVKHLPNPL (242 aa)). GTP is bound by residues 28–35 (AHIDHGKT), 94–98 (DTPGH), and 148–151 (NKVD). Histidine 597 is subject to Diphthamide.

Belongs to the TRAFAC class translation factor GTPase superfamily. Classic translation factor GTPase family. EF-G/EF-2 subfamily.

The protein localises to the cytoplasm. Functionally, catalyzes the GTP-dependent ribosomal translocation step during translation elongation. During this step, the ribosome changes from the pre-translocational (PRE) to the post-translocational (POST) state as the newly formed A-site-bound peptidyl-tRNA and P-site-bound deacylated tRNA move to the P and E sites, respectively. Catalyzes the coordinated movement of the two tRNA molecules, the mRNA and conformational changes in the ribosome. The sequence is that of Elongation factor 2 from Methanoculleus marisnigri (strain ATCC 35101 / DSM 1498 / JR1).